Here is a 382-residue protein sequence, read N- to C-terminus: Protein farnesyltransferase subunit beta (382 aa).

PFTB repeat units lie at residues 78 to 119, 129 to 170, 178 to 219, 226 to 268, and 286 to 328; these read CERA…CLCD, RDRL…SLVG, FEGT…ALLG, EIKL…VIVA, and PEKL…SSIA. (2E,6E)-farnesyl diphosphate-binding positions include 204 to 207 and 247 to 250; these read HGGY and RSNK. Residues D253 and C255 each contribute to the Zn(2+) site. 256 to 259 serves as a coordination point for (2E,6E)-farnesyl diphosphate; the sequence is YSWW. H316 is a binding site for Zn(2+).

The protein belongs to the protein prenyltransferase subunit beta family. As to quaternary structure, heterodimer of an alpha(cwp1) and a beta(cpp1) subunit. Zn(2+) is required as a cofactor.

The catalysed reaction is L-cysteinyl-[protein] + (2E,6E)-farnesyl diphosphate = S-(2E,6E)-farnesyl-L-cysteinyl-[protein] + diphosphate. In terms of biological role, catalyzes the transfer of a farnesyl moiety from farnesyl diphosphate to a cysteine at the fourth position from the C-terminus of several proteins. The beta(cpp1) subunit is responsible for peptide-binding. This Schizosaccharomyces pombe (strain 972 / ATCC 24843) (Fission yeast) protein is Protein farnesyltransferase subunit beta (cpp1).